The sequence spans 454 residues: Replicative DNA helicase DnaC (454 aa).

Positions 179–445 (RKGDITGIPT…NKFVNLERRF (267 aa)) constitute an SF4 helicase domain. 210–217 (ARPSVGKT) serves as a coordination point for ATP.

It belongs to the helicase family. DnaB subfamily. In terms of assembly, the DNA replisome assembles sequentially on oriC in this order; DnaA, DnaD, DnaB, DnaI-DnaC helicase. Monomer in the absence of ATP, in its presence forms a probable homohexamer which is not active as a helicase in vitro. Interacts separately and simultaneously with helicase loaders DnaB and DnaI. Interaction with DnaB does not require ATP. Interaction with DnaI requires ATP, probably forms a DnaC(6):DnaI(6) complex, which is not active as a helicase.

It is found in the cytoplasm. Its subcellular location is the nucleoid. The enzyme catalyses Couples ATP hydrolysis with the unwinding of duplex DNA at the replication fork by translocating in the 5'-3' direction. This creates two antiparallel DNA single strands (ssDNA). The leading ssDNA polymer is the template for DNA polymerase III holoenzyme which synthesizes a continuous strand.. It catalyses the reaction ATP + H2O = ADP + phosphate + H(+). In terms of biological role, the main replicative DNA helicase, it participates in initiation and elongation during chromosome replication. Travels ahead of the DNA replisome, separating dsDNA into templates for DNA synthesis. The monomer has helicase activity in the presence of DnaI which is further increased by DnaB; the purified oligomeric form (probably a DnaC hexamer) does not have helicase activity in vitro, nor does the DnaC(6):DnaI(6) complex. The direction was not determined but is probably 5'-3'. Helicase activity requires an rNTP and is inactive with dNTPs. Has weak ATPase activity as a monomer, as an oligomer has ATPase activity which is stimulated by single-stranded (ss)DNA and further stimulated by DnaI and more by DnaB. Its function is as follows. Deletion of a single T residue in the promoter region (a run of 8 Ts becomes 7 Ts) decreases the helicase levels by 50%, decreasing DNA replication inititation during fast growth in rich medium. Suppresses the synthetic lethality of a dnaA1-yabA deletion for growth on rich medium. The polypeptide is Replicative DNA helicase DnaC (Bacillus subtilis (strain 168)).